Consider the following 209-residue polypeptide: Imidazole glycerol phosphate synthase subunit HisH (209 aa).

Positions 3–209 constitute a Glutamine amidotransferase type-1 domain; sequence KIGLIDYGMG…WINWLKKNKF (207 aa). C81 (nucleophile) is an active-site residue. Active-site residues include H185 and E187.

As to quaternary structure, heterodimer of HisH and HisF.

The protein localises to the cytoplasm. The enzyme catalyses 5-[(5-phospho-1-deoxy-D-ribulos-1-ylimino)methylamino]-1-(5-phospho-beta-D-ribosyl)imidazole-4-carboxamide + L-glutamine = D-erythro-1-(imidazol-4-yl)glycerol 3-phosphate + 5-amino-1-(5-phospho-beta-D-ribosyl)imidazole-4-carboxamide + L-glutamate + H(+). It catalyses the reaction L-glutamine + H2O = L-glutamate + NH4(+). It functions in the pathway amino-acid biosynthesis; L-histidine biosynthesis; L-histidine from 5-phospho-alpha-D-ribose 1-diphosphate: step 5/9. In terms of biological role, IGPS catalyzes the conversion of PRFAR and glutamine to IGP, AICAR and glutamate. The HisH subunit catalyzes the hydrolysis of glutamine to glutamate and ammonia as part of the synthesis of IGP and AICAR. The resulting ammonia molecule is channeled to the active site of HisF. This chain is Imidazole glycerol phosphate synthase subunit HisH, found in Prochlorococcus marinus (strain NATL2A).